We begin with the raw amino-acid sequence, 262 residues long: tRNA pseudouridine synthase A (262 aa).

Asp-51 functions as the Nucleophile in the catalytic mechanism. Tyr-109 is a binding site for substrate.

It belongs to the tRNA pseudouridine synthase TruA family. In terms of assembly, homodimer.

It catalyses the reaction uridine(38/39/40) in tRNA = pseudouridine(38/39/40) in tRNA. Functionally, formation of pseudouridine at positions 38, 39 and 40 in the anticodon stem and loop of transfer RNAs. This Aliivibrio fischeri (strain ATCC 700601 / ES114) (Vibrio fischeri) protein is tRNA pseudouridine synthase A.